The following is a 543-amino-acid chain: CTP synthase (543 aa).

The amidoligase domain stretch occupies residues 1–265 (MTRYVFITGG…DREVLRHFGL (265 aa)). Serine 13 is a CTP binding site. Serine 13 contacts UTP. Residue 14-19 (SLGKGI) participates in ATP binding. L-glutamine is bound at residue tyrosine 54. Position 71 (aspartate 71) interacts with ATP. 2 residues coordinate Mg(2+): aspartate 71 and glutamate 139. CTP contacts are provided by residues 146 to 148 (DIE), 186 to 191 (KTKPTQ), and lysine 222. Residues 186–191 (KTKPTQ) and lysine 222 each bind UTP. Valine 240 is an ATP binding site. The Glutamine amidotransferase type-1 domain maps to 291-542 (TIAVVGKYTN…IEAAVKQMRL (252 aa)). Glycine 353 serves as a coordination point for L-glutamine. The Nucleophile; for glutamine hydrolysis role is filled by cysteine 380. L-glutamine-binding positions include 381–384 (FGMQ), glutamate 404, and arginine 470. Residues histidine 515 and glutamate 517 contribute to the active site.

It belongs to the CTP synthase family. In terms of assembly, homotetramer.

It carries out the reaction UTP + L-glutamine + ATP + H2O = CTP + L-glutamate + ADP + phosphate + 2 H(+). The catalysed reaction is L-glutamine + H2O = L-glutamate + NH4(+). It catalyses the reaction UTP + NH4(+) + ATP = CTP + ADP + phosphate + 2 H(+). Its pathway is pyrimidine metabolism; CTP biosynthesis via de novo pathway; CTP from UDP: step 2/2. With respect to regulation, allosterically activated by GTP, when glutamine is the substrate; GTP has no effect on the reaction when ammonia is the substrate. The allosteric effector GTP functions by stabilizing the protein conformation that binds the tetrahedral intermediate(s) formed during glutamine hydrolysis. Inhibited by the product CTP, via allosteric rather than competitive inhibition. In terms of biological role, catalyzes the ATP-dependent amination of UTP to CTP with either L-glutamine or ammonia as the source of nitrogen. Regulates intracellular CTP levels through interactions with the four ribonucleotide triphosphates. This chain is CTP synthase, found in Acidiphilium cryptum (strain JF-5).